Reading from the N-terminus, the 353-residue chain is Protein RecA (353 aa).

ATP is bound at residue 67–74 (GPESSGKT).

It belongs to the RecA family.

It is found in the cytoplasm. Its function is as follows. Can catalyze the hydrolysis of ATP in the presence of single-stranded DNA, the ATP-dependent uptake of single-stranded DNA by duplex DNA, and the ATP-dependent hybridization of homologous single-stranded DNAs. It interacts with LexA causing its activation and leading to its autocatalytic cleavage. This chain is Protein RecA, found in Salmonella paratyphi A (strain ATCC 9150 / SARB42).